Reading from the N-terminus, the 87-residue chain is MANIKSAKKRAVQSEKRRKHNASRRSMMRTFIKKVYAAIATGDKEVAQKAFNDMQPIVDRQAGKGLIHKNKAARHKSNLVARINAMQ.

The segment at 1–27 is disordered; that stretch reads MANIKSAKKRAVQSEKRRKHNASRRSM.

The protein belongs to the bacterial ribosomal protein bS20 family.

Binds directly to 16S ribosomal RNA. The chain is Small ribosomal subunit protein bS20 from Pectobacterium carotovorum subsp. carotovorum (strain PC1).